Here is a 214-residue protein sequence, read N- to C-terminus: Potassium/proton antiporter CemA (214 aa).

The next 2 helical transmembrane spans lie at 92 to 112 and 174 to 194; these read ILHL…SILG and IISG…KYWI.

It belongs to the CemA family.

It localises to the plastid. Its subcellular location is the chloroplast inner membrane. The catalysed reaction is K(+)(in) + H(+)(out) = K(+)(out) + H(+)(in). Functionally, contributes to K(+)/H(+) antiport activity by supporting proton efflux to control proton extrusion and homeostasis in chloroplasts in a light-dependent manner to modulate photosynthesis. Prevents excessive induction of non-photochemical quenching (NPQ) under continuous-light conditions. Indirectly promotes efficient inorganic carbon uptake into chloroplasts. The polypeptide is Potassium/proton antiporter CemA (Oenothera argillicola (Appalachian evening primrose)).